The following is a 363-amino-acid chain: Serpentine receptor class beta-18 (363 aa).

The next 7 membrane-spanning stretches (helical) occupy residues 52-72 (LAQF…VVYI), 92-112 (MLLF…YHII), 135-155 (FRYT…CIYI), 172-192 (LILA…IIWV), 218-238 (KATI…IGLF), 276-296 (AALM…YNFL), and 303-323 (TIAT…LVIV).

It belongs to the nematode receptor-like protein srb family.

Its subcellular location is the membrane. The protein is Serpentine receptor class beta-18 (srb-18) of Caenorhabditis elegans.